The sequence spans 1207 residues: Putative coatomer subunit alpha (1207 aa).

WD repeat units follow at residues 9-50 (SRSS…DRFD), 51-90 (GHDGPVRGIAFHPTQPLFVSGGDDYKVNVWNYKSRKLLFS), 93-134 (GHMD…AILT), 135-174 (GHSHYVMCAAFHPSEDLIVSASLDQTVRVWDISGLRMKNA), 210-249 (GHDRGVNWCAFHPTLPLILSAGDDRLVKLWRMTASKAWEV), 254-293 (GHFNNVSCCLFHPHQELILSASEDKTIRVWDLNRRTAVQT), 296-336 (RDND…HALN), and 370-411 (SAWL…NSLP). Phosphoserine is present on residues S409 and S942.

Oligomeric complex that consists of at least the alpha, beta, beta', gamma, delta, epsilon and zeta subunits.

It localises to the cytoplasm. It is found in the golgi apparatus membrane. The coatomer is a cytosolic protein complex that binds to dilysine motifs and reversibly associates with Golgi non-clathrin-coated vesicles, which further mediate biosynthetic protein transport from the ER, via the Golgi up to the trans Golgi network. Coatomer complex is required for budding from Golgi membranes, and is essential for the retrograde Golgi-to-ER transport of dilysine-tagged proteins. The protein is Putative coatomer subunit alpha of Schizosaccharomyces pombe (strain 972 / ATCC 24843) (Fission yeast).